A 65-amino-acid chain; its full sequence is Sperm protamine P1 (65 aa).

Residues 1 to 65 (MARYRHSRSR…RYSRRRRRRY (65 aa)) form a disordered region.

The protein belongs to the protamine P1 family. In terms of tissue distribution, testis.

The protein resides in the nucleus. It localises to the chromosome. Functionally, protamines substitute for histones in the chromatin of sperm during the haploid phase of spermatogenesis. They compact sperm DNA into a highly condensed, stable and inactive complex. In Lagorchestes hirsutus (Rufous hare-wallaby), this protein is Sperm protamine P1 (PRM1).